Consider the following 459-residue polypeptide: Putrescine aminotransferase (459 aa).

Pyridoxal 5'-phosphate-binding positions include glycine 150 to threonine 151 and glutamine 274. Position 300 is an N6-(pyridoxal phosphate)lysine (lysine 300). Threonine 332 provides a ligand contact to pyridoxal 5'-phosphate.

The protein belongs to the class-III pyridoxal-phosphate-dependent aminotransferase family. Putrescine aminotransferase subfamily. It depends on pyridoxal 5'-phosphate as a cofactor.

The enzyme catalyses an alkane-alpha,omega-diamine + 2-oxoglutarate = an omega-aminoaldehyde + L-glutamate. It catalyses the reaction putrescine + 2-oxoglutarate = 1-pyrroline + L-glutamate + H2O. It carries out the reaction cadaverine + 2-oxoglutarate = 5-aminopentanal + L-glutamate. It participates in amine and polyamine degradation; putrescine degradation; 4-aminobutanal from putrescine (transaminase route): step 1/1. Its function is as follows. Catalyzes the aminotransferase reaction from putrescine to 2-oxoglutarate, leading to glutamate and 4-aminobutanal, which spontaneously cyclizes to form 1-pyrroline. This is the first step in one of two pathways for putrescine degradation, where putrescine is converted into 4-aminobutanoate (gamma-aminobutyrate or GABA) via 4-aminobutanal. Also functions as a cadaverine transaminase in a a L-lysine degradation pathway to succinate that proceeds via cadaverine, glutarate and L-2-hydroxyglutarate. The polypeptide is Putrescine aminotransferase (Escherichia coli (strain K12 / MC4100 / BW2952)).